Here is a 413-residue protein sequence, read N- to C-terminus: Protein CDKN2AIP homolog B (413 aa).

In terms of domain architecture, XRN2-binding (XTBD) spans 21–118; it reads LERVRGQCES…TTRDELVAKV (98 aa). Residues 118–266 form a disordered region; sequence VKKRGNSSSN…PTRRFTTEHT (149 aa). Over residues 183–193 the composition is skewed to basic and acidic residues; sequence NKREAHSRTDV.

This sequence belongs to the CARF family.

The protein resides in the nucleus. The protein localises to the nucleoplasm. Functionally, may regulate DNA damage response and cell proliferation. The polypeptide is Protein CDKN2AIP homolog B (cdkn2aip-b) (Xenopus laevis (African clawed frog)).